Reading from the N-terminus, the 138-residue chain is MEGSEAGGGGLLQQILSLRLVPRVGNGTTYSSPLSTFPEMWYGVFLWALVSSLSFHVPAALLALFTLRHHKYGRFMSVSLLLMGIVGPITAGILTSAAIAGVYRAAGKKMIPFEALIFEVGQTFCVVVVSFLRILATL.

Residues 1–44 (MEGSEAGGGGLLQQILSLRLVPRVGNGTTYSSPLSTFPEMWYGV) lie on the Lumenal side of the membrane. N-linked (GlcNAc...) asparagine glycosylation occurs at Asn26. The chain crosses the membrane as a helical span at residues 45–65 (FLWALVSSLSFHVPAALLALF). Residues 66 to 79 (TLRHHKYGRFMSVS) are Cytoplasmic-facing. Residues 80 to 100 (LLLMGIVGPITAGILTSAAIA) traverse the membrane as a helical segment. Residues 101–110 (GVYRAAGKKM) are Lumenal-facing. A helical transmembrane segment spans residues 111 to 131 (IPFEALIFEVGQTFCVVVVSF). Residues 132 to 138 (LRILATL) lie on the Cytoplasmic side of the membrane.

The protein belongs to the TMEM170 family.

It is found in the endoplasmic reticulum membrane. The protein resides in the nucleus envelope. Its function is as follows. May regulate membrane morphogenesis in the endoplasmic reticulum (ER) by promoting ER sheet formation at the expense of ER tubules. This is Transmembrane protein 170A (TMEM170A) from Gallus gallus (Chicken).